We begin with the raw amino-acid sequence, 523 residues long: Beta-glucosidase 31 (523 aa).

The N-terminal stretch at 1–22 (MTPARVVFICCVVLLAAAAAAA) is a signal peptide. A beta-D-glucoside-binding positions include Gln-49, His-149, and 194–195 (NE). The Proton donor role is filled by Glu-195. The cysteines at positions 214 and 223 are disulfide-linked. N-linked (GlcNAc...) asparagine glycosylation is present at Asn-227. Residues Tyr-339 and Glu-413 each coordinate a beta-D-glucoside. The Nucleophile role is filled by Glu-413. N-linked (GlcNAc...) asparagine glycosylation occurs at Asn-450. A beta-D-glucoside contacts are provided by residues Trp-460, 467–468 (EY), and Phe-476.

It belongs to the glycosyl hydrolase 1 family.

It catalyses the reaction Hydrolysis of terminal, non-reducing beta-D-glucosyl residues with release of beta-D-glucose.. In Oryza sativa subsp. japonica (Rice), this protein is Beta-glucosidase 31 (BGLU31).